A 76-amino-acid polypeptide reads, in one-letter code: Ovarian cancer-related protein 1 (76 aa).

The protein is Ovarian cancer-related protein 1 (OCR1) of Homo sapiens (Human).